The chain runs to 130 residues: Small ribosomal subunit protein uS11c (130 aa).

It belongs to the universal ribosomal protein uS11 family. In terms of assembly, part of the 30S ribosomal subunit.

It is found in the plastid. The sequence is that of Small ribosomal subunit protein uS11c from Aneura mirabilis (Parasitic liverwort).